A 205-amino-acid chain; its full sequence is Recombination protein RecR (205 aa).

A C4-type zinc finger spans residues 64–79 (CRRCFNITVDELCPIC). The Toprim domain occupies 87-182 (TKICVVEEPL…RVTRPARGLP (96 aa)).

Belongs to the RecR family.

May play a role in DNA repair. It seems to be involved in an RecBC-independent recombinational process of DNA repair. It may act with RecF and RecO. In Chloroflexus aggregans (strain MD-66 / DSM 9485), this protein is Recombination protein RecR.